The following is a 66-amino-acid chain: Potassium channel toxin alpha-KTx 30.3 (66 aa).

Residues 1–24 (MNKTFFLVVIMATVLVLAFDATDA) form the signal peptide. Intrachain disulfides connect Cys30-Cys50, Cys36-Cys55, and Cys40-Cys57.

This sequence belongs to the short scorpion toxin superfamily. Potassium channel inhibitor family. Alpha-KTx 30 subfamily. In terms of tissue distribution, expressed by the venom gland.

The protein localises to the secreted. In terms of biological role, inhibits Kv1.3/KCNA3 channel. The chain is Potassium channel toxin alpha-KTx 30.3 from Scorpiops jendeki (Scorpion).